Reading from the N-terminus, the 87-residue chain is Tan_10cys (87 aa).

The first 21 residues, 1–21 (MNLKVLFLLAMVLVTLCLGED), serve as a signal peptide directing secretion. Residues 22–27 (RVTDRR) constitute a propeptide that is removed on maturation.

This sequence belongs to the teretoxin C (TC) superfamily. In terms of processing, contains 5 disulfide bonds. As to expression, expressed by the venom duct.

The protein resides in the secreted. In Terebra anilis (Auger snail), this protein is Tan_10cys.